Here is a 1063-residue protein sequence, read N- to C-terminus: Kinesin-like protein KIN-7H (1063 aa).

In terms of domain architecture, Kinesin motor spans 18–342 (KIYVSVRMRP…LLFASCAKEV (325 aa)). 106 to 113 (GQTSSGKT) contacts ATP. Residues 351 to 436 (VMSDKALVKH…KNQEKETLST (86 aa)) are a coiled coil. A disordered region spans residues 574-664 (SDISIGPVEN…ESNLTKNPAL (91 aa)).

The protein belongs to the TRAFAC class myosin-kinesin ATPase superfamily. Kinesin family. KIN-7 subfamily.

The polypeptide is Kinesin-like protein KIN-7H (Arabidopsis thaliana (Mouse-ear cress)).